A 37-amino-acid polypeptide reads, in one-letter code: Large ribosomal subunit protein bL36 (37 aa).

This sequence belongs to the bacterial ribosomal protein bL36 family.

The protein is Large ribosomal subunit protein bL36 of Gloeobacter violaceus (strain ATCC 29082 / PCC 7421).